Consider the following 745-residue polypeptide: Elongation factor G, mitochondrial (745 aa).

Residues 1–15 constitute a mitochondrion transit peptide; that stretch reads MSLITRLLTASSPLR. In terms of domain architecture, tr-type G spans 40–317; the sequence is DKIRNIGISA…AVLEYLPNPG (278 aa). GTP-binding positions include 49 to 56, 116 to 120, and 170 to 173; these read AHIDSGKT, DTPGH, and NKLD.

The protein belongs to the TRAFAC class translation factor GTPase superfamily. Classic translation factor GTPase family. EF-G/EF-2 subfamily.

The protein resides in the mitochondrion. It participates in protein biosynthesis; polypeptide chain elongation. In terms of biological role, mitochondrial GTPase that catalyzes the GTP-dependent ribosomal translocation step during translation elongation. During this step, the ribosome changes from the pre-translocational (PRE) to the post-translocational (POST) state as the newly formed A-site-bound peptidyl-tRNA and P-site-bound deacylated tRNA move to the P and E sites, respectively. Catalyzes the coordinated movement of the two tRNA molecules, the mRNA and conformational changes in the ribosome. Essential during development as it acts as a retrograde signal from mitochondria to the nucleus to slow down cell proliferation if mitochondrial energy output is low. In Drosophila ananassae (Fruit fly), this protein is Elongation factor G, mitochondrial (ico).